The primary structure comprises 180 residues: Large ribosomal subunit protein uL6 (180 aa).

It belongs to the universal ribosomal protein uL6 family. Part of the 50S ribosomal subunit.

Its function is as follows. This protein binds to the 23S rRNA, and is important in its secondary structure. It is located near the subunit interface in the base of the L7/L12 stalk, and near the tRNA binding site of the peptidyltransferase center. The sequence is that of Large ribosomal subunit protein uL6 from Clostridium botulinum (strain Eklund 17B / Type B).